The following is a 210-amino-acid chain: Outer-membrane lipoprotein carrier protein (210 aa).

Residues 1 to 23 (MKKRIQKTILTVLFSSLSSIAFA) form the signal peptide.

This sequence belongs to the LolA family. As to quaternary structure, monomer.

It localises to the periplasm. Functionally, participates in the translocation of lipoproteins from the inner membrane to the outer membrane. Only forms a complex with a lipoprotein if the residue after the N-terminal Cys is not an aspartate (The Asp acts as a targeting signal to indicate that the lipoprotein should stay in the inner membrane). The polypeptide is Outer-membrane lipoprotein carrier protein (Haemophilus ducreyi (strain 35000HP / ATCC 700724)).